A 1049-amino-acid polypeptide reads, in one-letter code: Isoleucine--tRNA ligase (1049 aa).

A 'HIGH' region motif is present at residues 48–59 (PYPSSPTPHIGT). The short motif at 597 to 601 (EMHKS) is the 'KMSKS' region element. Lysine 600 provides a ligand contact to ATP.

It belongs to the class-I aminoacyl-tRNA synthetase family. IleS type 2 subfamily. Monomer. Zn(2+) serves as cofactor.

The protein localises to the cytoplasm. The catalysed reaction is tRNA(Ile) + L-isoleucine + ATP = L-isoleucyl-tRNA(Ile) + AMP + diphosphate. Functionally, catalyzes the attachment of isoleucine to tRNA(Ile). As IleRS can inadvertently accommodate and process structurally similar amino acids such as valine, to avoid such errors it has two additional distinct tRNA(Ile)-dependent editing activities. One activity is designated as 'pretransfer' editing and involves the hydrolysis of activated Val-AMP. The other activity is designated 'posttransfer' editing and involves deacylation of mischarged Val-tRNA(Ile). This is Isoleucine--tRNA ligase from Saccharolobus islandicus (strain M.16.27) (Sulfolobus islandicus).